A 129-amino-acid chain; its full sequence is Small ribosomal subunit protein uS11 (129 aa).

This sequence belongs to the universal ribosomal protein uS11 family. As to quaternary structure, part of the 30S ribosomal subunit. Interacts with proteins S7 and S18. Binds to IF-3.

Located on the platform of the 30S subunit, it bridges several disparate RNA helices of the 16S rRNA. Forms part of the Shine-Dalgarno cleft in the 70S ribosome. In Lactobacillus gasseri (strain ATCC 33323 / DSM 20243 / BCRC 14619 / CIP 102991 / JCM 1131 / KCTC 3163 / NCIMB 11718 / NCTC 13722 / AM63), this protein is Small ribosomal subunit protein uS11.